The sequence spans 156 residues: Transcription elongation factor GreA (156 aa).

Residues 46-66 are a coiled coil; it reads AEYHAAREKQSFVEGRIKELE.

This sequence belongs to the GreA/GreB family.

Its function is as follows. Necessary for efficient RNA polymerase transcription elongation past template-encoded arresting sites. The arresting sites in DNA have the property of trapping a certain fraction of elongating RNA polymerases that pass through, resulting in locked ternary complexes. Cleavage of the nascent transcript by cleavage factors such as GreA or GreB allows the resumption of elongation from the new 3'terminus. GreA releases sequences of 2 to 3 nucleotides. This is Transcription elongation factor GreA from Paracoccus denitrificans (strain Pd 1222).